The sequence spans 506 residues: Maturase K (506 aa).

The protein belongs to the intron maturase 2 family. MatK subfamily.

It is found in the plastid. The protein resides in the chloroplast. In terms of biological role, usually encoded in the trnK tRNA gene intron. Probably assists in splicing its own and other chloroplast group II introns. In Carica papaya (Papaya), this protein is Maturase K.